We begin with the raw amino-acid sequence, 259 residues long: Cell division protein FtsQ (259 aa).

Residues 1–15 (MTRDQTATFGRHALR) lie on the Cytoplasmic side of the membrane. Residues 16–36 (VAGSGLLVAGVVALGLLGWQW) traverse the membrane as a helical segment. Residues 37–259 (RANVTVDRVA…VVTRTRPLDG (223 aa)) lie on the Periplasmic side of the membrane. The region spanning 40-109 (VTVDRVAVTG…GALTISVTER (70 aa)) is the POTRA domain.

Belongs to the FtsQ/DivIB family. FtsQ subfamily.

Its subcellular location is the cell inner membrane. Its function is as follows. Essential cell division protein. The protein is Cell division protein FtsQ of Salinibacter ruber (strain DSM 13855 / M31).